The following is a 426-amino-acid chain: Phosphoribosylamine--glycine ligase (426 aa).

Residues 113-320 enclose the ATP-grasp domain; the sequence is KSLMTEAKIP…LLELLYRAST (208 aa). 139-200 contacts ATP; that stretch reads LESKSIPIVI…EEFMEGQEAS (62 aa). Mg(2+)-binding residues include Glu290 and Asn292.

Belongs to the GARS family. Requires Mg(2+) as cofactor. Mn(2+) is required as a cofactor.

It catalyses the reaction 5-phospho-beta-D-ribosylamine + glycine + ATP = N(1)-(5-phospho-beta-D-ribosyl)glycinamide + ADP + phosphate + H(+). It functions in the pathway purine metabolism; IMP biosynthesis via de novo pathway; N(1)-(5-phospho-D-ribosyl)glycinamide from 5-phospho-alpha-D-ribose 1-diphosphate: step 2/2. The chain is Phosphoribosylamine--glycine ligase from Leptospira interrogans serogroup Icterohaemorrhagiae serovar Lai (strain 56601).